The primary structure comprises 110 residues: Large ribosomal subunit protein uL22 (110 aa).

This sequence belongs to the universal ribosomal protein uL22 family. As to quaternary structure, part of the 50S ribosomal subunit.

In terms of biological role, this protein binds specifically to 23S rRNA; its binding is stimulated by other ribosomal proteins, e.g. L4, L17, and L20. It is important during the early stages of 50S assembly. It makes multiple contacts with different domains of the 23S rRNA in the assembled 50S subunit and ribosome. Functionally, the globular domain of the protein is located near the polypeptide exit tunnel on the outside of the subunit, while an extended beta-hairpin is found that lines the wall of the exit tunnel in the center of the 70S ribosome. This Stutzerimonas stutzeri (strain A1501) (Pseudomonas stutzeri) protein is Large ribosomal subunit protein uL22.